The primary structure comprises 805 residues: Ribosome biogenesis protein ERB1 (805 aa).

The segment at 1-105 (MVKGRKSQKA…SDFSEDDTKS (105 aa)) is disordered. Basic and acidic residues predominate over residues 8 to 22 (QKADKVTKAKKRVAD). The span at 23–75 (EVDESESEPELQVEGLIDAEAESEDDESFESAEENASAEEDEEDEEDEEDSDA) shows a compositional bias: acidic residues. A required for interaction with NOP7 region spans residues 264 to 382 (RFVPSKNEAK…LRKVPGYTES (119 aa)). A required for interaction with YTM1 region spans residues 382 to 418 (SVRERFERSLDLYLAPRMRKNKLNIDPESLIPELPSP). WD repeat units lie at residues 434–473 (GHEG…EVYR), 482–522 (NPED…YDIE), 590–632 (VCKK…TQSP), 635–673 (KSKG…LVKK), 676–715 (PGAR…TPYK), 719–758 (YHDK…DMMK), and 775–805 (GHLG…MWTT).

It belongs to the WD repeat BOP1/ERB1 family. Component of the NOP7 complex, composed of ERB1, NOP7 and YTM1. The complex is held together by ERB1, which interacts with NOP7 via its N-terminal domain and with YTM1 via a high-affinity interaction between the seven-bladed beta-propeller domains of the 2 proteins. The NOP7 complex associates with the 66S pre-ribosome.

It is found in the nucleus. The protein resides in the nucleolus. Its subcellular location is the nucleoplasm. Component of the NOP7 complex, which is required for maturation of the 25S and 5.8S ribosomal RNAs and formation of the 60S ribosome. The chain is Ribosome biogenesis protein ERB1 from Candida glabrata (strain ATCC 2001 / BCRC 20586 / JCM 3761 / NBRC 0622 / NRRL Y-65 / CBS 138) (Yeast).